We begin with the raw amino-acid sequence, 387 residues long: Methyltransferase phomM' (387 aa).

Residues 98–223 (PHRPKDLHIL…QSVADLFTTL (126 aa)) are methyltransferase domain.

It belongs to the class I-like SAM-binding methyltransferase superfamily. Erg6/SMT family.

It participates in mycotoxin biosynthesis. In terms of biological role, methyltransferase; part of the gene cluster that mediates the biosynthesis of the phomopsins, a group of hexapeptide mycotoxins which infects lupins and causes lupinosis disease in livestock. Within the pathway, phomM' acts as an S-adenosylmethionine-dependent alpha-N-methyltransferase that catalyzes two successive N-methylation reactions, converting N-desmethyl-phomopsin A to phomopsin A and phomopsin A further to an N,N-dimethylated congener called phomopsin E. The pathway starts with the processing of the precursor phomA' by several endopeptidases including kexin proteases as well as the cluster-specific S41 family peptidase phomP1 and the oligopeptidase phomG' to produce 10 identical copies of the hexapeptide Tyr-Val-Ile-Pro-Ile-Asp. After being excised from the precursor peptide, the core peptides are cyclized and modified post-translationally by enzymes encoded within the gene cluster. The timing and order of proteolysis of the phomA' precursor and PTMs are still unknown. Two tyrosinase-like enzymes, phomQ1' and phomQ2, catalyze the chlorination and hydroxylation of Tyr, respectively. PhomYb, is proposed to be involved in the construction of the macrocyclic structure. The other 4 ustYa family proteins may be involved in PTMs that generate the unique structure of phomopsin A. PhomYa' is required for the hydroxylation of C-beta of Tyr. PhomYc', phomYd', and phomYe are responsible for the biosynthesis of 2,3-dehydroisoleucine (dIle), 2,3-dehydroaspartic acid (dAsp), and 3,4-dehydroproline (dPro), respectively. While dIle formation by phomYc' is indispensable for the installation of dAsp by phomYd', the order of the other PTMs have not been elucidated yet. Most of the biosynthetic enzymes likely have broad substrate specificity, and thus, there might be a metabolic grid from a precursor to phomopsin A. The enzyme(s) responsible for the biosynthesis of 3,4-dehydrovaline (dVal) have also not been identified yet. Finally, phomM' acts as an S-adenosylmethionine-dependent alpha-N-methyltransferase that catalyzes two successive N-methylation reactions, converting N-desmethyl-phomopsin A to phomopsin A and phomopsin A further to an N,N-dimethylated congener called phomopsin E. In Diaporthe leptostromiformis (Lupinosis disease fungus), this protein is Methyltransferase phomM'.